Consider the following 956-residue polypeptide: UvrABC system protein A (956 aa).

Residue 33 to 40 (GLSGSGKS) participates in ATP binding. Residues 252–279 (CPYCGFSVGELEPRMFSFNSPFGACPTC) form a C4-type zinc finger. 2 consecutive ABC transporter domains span residues 309 to 587 (WRPI…KNSI) and 607 to 936 (GNGL…KYLK). 639–646 (GVSGSGKS) contacts ATP. The C4-type zinc finger occupies 738-764 (CEACKGDGIIKIEMHFLPDVYVPCEVC).

Belongs to the ABC transporter superfamily. UvrA family. As to quaternary structure, forms a heterotetramer with UvrB during the search for lesions.

It is found in the cytoplasm. Its function is as follows. The UvrABC repair system catalyzes the recognition and processing of DNA lesions. UvrA is an ATPase and a DNA-binding protein. A damage recognition complex composed of 2 UvrA and 2 UvrB subunits scans DNA for abnormalities. When the presence of a lesion has been verified by UvrB, the UvrA molecules dissociate. The chain is UvrABC system protein A from Listeria monocytogenes serotype 4b (strain F2365).